Consider the following 311-residue polypeptide: Ribonuclease Z (311 aa).

Residues His61, His63, Asp65, His66, His139, Asp210, and His268 each contribute to the Zn(2+) site. Catalysis depends on Asp65, which acts as the Proton acceptor.

It belongs to the RNase Z family. Homodimer. Zn(2+) is required as a cofactor.

It catalyses the reaction Endonucleolytic cleavage of RNA, removing extra 3' nucleotides from tRNA precursor, generating 3' termini of tRNAs. A 3'-hydroxy group is left at the tRNA terminus and a 5'-phosphoryl group is left at the trailer molecule.. In terms of biological role, zinc phosphodiesterase, which displays some tRNA 3'-processing endonuclease activity. Probably involved in tRNA maturation, by removing a 3'-trailer from precursor tRNA. This is Ribonuclease Z from Haloarcula marismortui (strain ATCC 43049 / DSM 3752 / JCM 8966 / VKM B-1809) (Halobacterium marismortui).